The chain runs to 880 residues: Xylosyltransferase oxt (880 aa).

At 1–14 (MEQSVSARWLRRYR) the chain is on the cytoplasmic side. The helical; Signal-anchor for type II membrane protein transmembrane segment at 15–35 (PVLIILVLIFGIQLFLAYKSV) threads the bilayer. At 36-880 (DIGGGSGSGL…PKSDVDALLK (845 aa)) the chain is on the lumenal side. 4 disulfides stabilise this stretch: Cys87–Cys115, Cys131–Cys469, Cys488–Cys501, and Cys490–Cys499. Residues Asn135 and Asn139 are each glycosylated (N-linked (GlcNAc...) asparagine). The region spanning 138–232 (ANVSLGCYRD…FYAMNIYETG (95 aa)) is the WSC domain. UDP-alpha-D-xylose contacts are provided by residues Asp287 and 316 to 318 (TIW). N-linked (GlcNAc...) asparagine glycosylation is present at Asn346. UDP-alpha-D-xylose is bound at residue 419–420 (DW). UDP-alpha-D-xylose is bound by residues Ser502 and 526 to 527 (RK). N-linked (GlcNAc...) asparagine glycosylation is found at Asn700 and Asn729. Cysteines 846 and 859 form a disulfide.

This sequence belongs to the glycosyltransferase 14 family. XylT subfamily. Ca(2+) serves as cofactor. It depends on Mn(2+) as a cofactor. Mg(2+) is required as a cofactor.

The protein localises to the endoplasmic reticulum membrane. Its subcellular location is the golgi apparatus membrane. The enzyme catalyses UDP-alpha-D-xylose + L-seryl-[protein] = 3-O-(beta-D-xylosyl)-L-seryl-[protein] + UDP + H(+). It participates in glycan metabolism; chondroitin sulfate biosynthesis. Its pathway is glycan metabolism; heparan sulfate biosynthesis. Catalyzes the first step in biosynthesis of glycosaminoglycan. Transfers D-xylose from UDP-D-xylose to specific serine residues of the core protein. The polypeptide is Xylosyltransferase oxt (Drosophila pseudoobscura pseudoobscura (Fruit fly)).